Consider the following 246-residue polypeptide: Bis(5'-nucleosyl)-tetraphosphatase PrpE [asymmetrical] (246 aa).

Belongs to the PrpE family. Ni(2+) serves as cofactor.

It carries out the reaction P(1),P(4)-bis(5'-guanosyl) tetraphosphate + H2O = GMP + GTP + 2 H(+). In terms of biological role, asymmetrically hydrolyzes Ap4p to yield AMP and ATP. This chain is Bis(5'-nucleosyl)-tetraphosphatase PrpE [asymmetrical], found in Bacillus mycoides (strain KBAB4) (Bacillus weihenstephanensis).